The following is a 586-amino-acid chain: Phosphatidylinositol-3-phosphatase SAC1-A (586 aa).

Over 1-519 (MANAYERFNL…TPLHVKKDWK (519 aa)) the chain is Cytoplasmic. The 330-residue stretch at 121 to 450 (INNVLNTDGF…ANACAKQYAG (330 aa)) folds into the SAC domain. The segment at 451 to 586 (TGALKTDFTR…PKLVQKEKMD (136 aa)) is essential for phosphatidylinositol-4-phosphate phosphatase activity. The chain crosses the membrane as a helical span at residues 520-540 (FLLLPVIMVVAFSMCIICLLM). At 541–547 (AGDTWTE) the chain is on the lumenal side. A helical membrane pass occupies residues 548 to 568 (TLAYVLFWGMASALTAAVIVV). Over 569–586 (NGREFVDAPKLVQKEKMD) the chain is Cytoplasmic.

It localises to the endoplasmic reticulum membrane. The protein localises to the golgi apparatus membrane. It carries out the reaction a 1,2-diacyl-sn-glycero-3-phospho-(1D-myo-inositol-3-phosphate) + H2O = a 1,2-diacyl-sn-glycero-3-phospho-(1D-myo-inositol) + phosphate. The catalysed reaction is a 1,2-diacyl-sn-glycero-3-phospho-(1D-myo-inositol 4-phosphate) + H2O = a 1,2-diacyl-sn-glycero-3-phospho-(1D-myo-inositol) + phosphate. In terms of biological role, phosphoinositide phosphatase which catalyzes the hydrolysis of phosphatidylinositol 4-phosphate (PtdIns(4)P), phosphatidylinositol 3-phosphate (PtdIns(3)P) and has low activity towards phosphatidylinositol-3,5-bisphosphate (PtdIns(3,5)P2). This chain is Phosphatidylinositol-3-phosphatase SAC1-A (sacm1la), found in Danio rerio (Zebrafish).